The sequence spans 210 residues: Small ribosomal subunit protein uS3 (210 aa).

The KH type-2 domain maps to 38–106 (IRAFLKKRLY…EIFINIIEVR (69 aa)).

Belongs to the universal ribosomal protein uS3 family. Part of the 30S ribosomal subunit. Forms a tight complex with proteins S10 and S14.

Functionally, binds the lower part of the 30S subunit head. Binds mRNA in the 70S ribosome, positioning it for translation. The polypeptide is Small ribosomal subunit protein uS3 (Pelobacter propionicus (strain DSM 2379 / NBRC 103807 / OttBd1)).